The sequence spans 355 residues: N-acetyl-gamma-glutamyl-phosphate reductase (355 aa).

Residue C152 is part of the active site.

It belongs to the NAGSA dehydrogenase family. Type 1 subfamily.

The protein localises to the cytoplasm. The enzyme catalyses N-acetyl-L-glutamate 5-semialdehyde + phosphate + NADP(+) = N-acetyl-L-glutamyl 5-phosphate + NADPH + H(+). The protein operates within amino-acid biosynthesis; L-arginine biosynthesis; N(2)-acetyl-L-ornithine from L-glutamate: step 3/4. Its function is as follows. Catalyzes the NADPH-dependent reduction of N-acetyl-5-glutamyl phosphate to yield N-acetyl-L-glutamate 5-semialdehyde. The protein is N-acetyl-gamma-glutamyl-phosphate reductase of Psychrobacter sp. (strain PRwf-1).